The sequence spans 172 residues: Envelope protein UL45 (172 aa).

Topologically, residues 1–27 (MPLRASEHAYRPLGPGTPPVRARLPAA) are intravirion. The chain crosses the membrane as a helical; Signal-anchor for type II membrane protein span at residues 28–48 (AWVGVGTIIGGVVIIAALVLV). The Virion surface portion of the chain corresponds to 49 to 172 (PSRASWALSP…TSTRNALGLP (124 aa)).

It belongs to the herpesviridae HHV-1 UL45 family.

It is found in the virion membrane. Its function is as follows. Important virulence factor of HSV neurotropism. Seems to be required for glycoprotein B-induced fusion. Dispensable for growth in vitro. This is Envelope protein UL45 from Homo sapiens (Human).